Here is a 453-residue protein sequence, read N- to C-terminus: Bifunctional protein GlmU (453 aa).

The segment at 1-226 is pyrophosphorylase; it reads MAFSVVILAA…EIEVEGINNR (226 aa). Residues 8-11, Lys-22, Gln-73, and 78-79 each bind UDP-N-acetyl-alpha-D-glucosamine; these read LAAG and GT. Asp-102 contributes to the Mg(2+) binding site. UDP-N-acetyl-alpha-D-glucosamine-binding residues include Gly-137, Glu-151, Asn-166, and Asn-224. Mg(2+) is bound at residue Asn-224. The segment at 227-247 is linker; sequence KQLAAIERAFQFEQAQELMMQ. Positions 248–453 are N-acetyltransferase; it reads GVSLLDPHRF…SGWQRPTKPE (206 aa). Positions 330 and 348 each coordinate UDP-N-acetyl-alpha-D-glucosamine. His-360 acts as the Proton acceptor in catalysis. 2 residues coordinate UDP-N-acetyl-alpha-D-glucosamine: Tyr-363 and Asn-374. Residues Ala-377, 383-384, Ser-402, Ala-420, and Arg-437 each bind acetyl-CoA; that span reads NY.

In the N-terminal section; belongs to the N-acetylglucosamine-1-phosphate uridyltransferase family. It in the C-terminal section; belongs to the transferase hexapeptide repeat family. Homotrimer. The cofactor is Mg(2+).

The protein localises to the cytoplasm. The catalysed reaction is alpha-D-glucosamine 1-phosphate + acetyl-CoA = N-acetyl-alpha-D-glucosamine 1-phosphate + CoA + H(+). The enzyme catalyses N-acetyl-alpha-D-glucosamine 1-phosphate + UTP + H(+) = UDP-N-acetyl-alpha-D-glucosamine + diphosphate. It participates in nucleotide-sugar biosynthesis; UDP-N-acetyl-alpha-D-glucosamine biosynthesis; N-acetyl-alpha-D-glucosamine 1-phosphate from alpha-D-glucosamine 6-phosphate (route II): step 2/2. The protein operates within nucleotide-sugar biosynthesis; UDP-N-acetyl-alpha-D-glucosamine biosynthesis; UDP-N-acetyl-alpha-D-glucosamine from N-acetyl-alpha-D-glucosamine 1-phosphate: step 1/1. Its pathway is bacterial outer membrane biogenesis; LPS lipid A biosynthesis. Catalyzes the last two sequential reactions in the de novo biosynthetic pathway for UDP-N-acetylglucosamine (UDP-GlcNAc). The C-terminal domain catalyzes the transfer of acetyl group from acetyl coenzyme A to glucosamine-1-phosphate (GlcN-1-P) to produce N-acetylglucosamine-1-phosphate (GlcNAc-1-P), which is converted into UDP-GlcNAc by the transfer of uridine 5-monophosphate (from uridine 5-triphosphate), a reaction catalyzed by the N-terminal domain. This is Bifunctional protein GlmU from Pseudoalteromonas atlantica (strain T6c / ATCC BAA-1087).